The sequence spans 269 residues: Hydroxyethylthiazole kinase (269 aa).

Residue Met-41 coordinates substrate. The ATP site is built by Arg-117 and Ser-165. Substrate is bound at residue Gly-192.

This sequence belongs to the Thz kinase family. The cofactor is Mg(2+).

It carries out the reaction 5-(2-hydroxyethyl)-4-methylthiazole + ATP = 4-methyl-5-(2-phosphooxyethyl)-thiazole + ADP + H(+). The protein operates within cofactor biosynthesis; thiamine diphosphate biosynthesis; 4-methyl-5-(2-phosphoethyl)-thiazole from 5-(2-hydroxyethyl)-4-methylthiazole: step 1/1. Its function is as follows. Catalyzes the phosphorylation of the hydroxyl group of 4-methyl-5-beta-hydroxyethylthiazole (THZ). This Actinobacillus succinogenes (strain ATCC 55618 / DSM 22257 / CCUG 43843 / 130Z) protein is Hydroxyethylthiazole kinase.